A 662-amino-acid chain; its full sequence is DNA ligase (662 aa).

Residues 31-35 (DKDYD) and 79-80 (SL) contribute to the NAD(+) site. Catalysis depends on lysine 121, which acts as the N6-AMP-lysine intermediate. Positions 143, 177, and 313 each coordinate NAD(+). Residues cysteine 406, cysteine 409, cysteine 422, and cysteine 428 each coordinate Zn(2+). One can recognise a BRCT domain in the interval 586 to 662 (VLESPFMGKT…LSEEEFENMI (77 aa)).

Belongs to the NAD-dependent DNA ligase family. LigA subfamily. It depends on Mg(2+) as a cofactor. Requires Mn(2+) as cofactor.

It carries out the reaction NAD(+) + (deoxyribonucleotide)n-3'-hydroxyl + 5'-phospho-(deoxyribonucleotide)m = (deoxyribonucleotide)n+m + AMP + beta-nicotinamide D-nucleotide.. Functionally, DNA ligase that catalyzes the formation of phosphodiester linkages between 5'-phosphoryl and 3'-hydroxyl groups in double-stranded DNA using NAD as a coenzyme and as the energy source for the reaction. It is essential for DNA replication and repair of damaged DNA. The polypeptide is DNA ligase (Clostridium perfringens (strain SM101 / Type A)).